Reading from the N-terminus, the 84-residue chain is Large ribosomal subunit protein bL27 (84 aa).

Positions 1–21 (MAHKKGGGSTKNGRDSNPKYL) are disordered.

The protein belongs to the bacterial ribosomal protein bL27 family.

The protein is Large ribosomal subunit protein bL27 of Chlorobium limicola (strain DSM 245 / NBRC 103803 / 6330).